Consider the following 231-residue polypeptide: Orotidine 5'-phosphate decarboxylase (231 aa).

Residues Asp11, Lys33, Asp60 to Thr69, Thr117, Arg178, Gln187, Gly207, and Arg208 contribute to the substrate site. Lys62 functions as the Proton donor in the catalytic mechanism.

It belongs to the OMP decarboxylase family. Type 1 subfamily. As to quaternary structure, homodimer.

It catalyses the reaction orotidine 5'-phosphate + H(+) = UMP + CO2. Its pathway is pyrimidine metabolism; UMP biosynthesis via de novo pathway; UMP from orotate: step 2/2. Functionally, catalyzes the decarboxylation of orotidine 5'-monophosphate (OMP) to uridine 5'-monophosphate (UMP). This is Orotidine 5'-phosphate decarboxylase from Nitrosomonas europaea (strain ATCC 19718 / CIP 103999 / KCTC 2705 / NBRC 14298).